The primary structure comprises 226 residues: Thiamine-phosphate synthase (226 aa).

Residues 46 to 50 and Asn-87 contribute to the 4-amino-2-methyl-5-(diphosphooxymethyl)pyrimidine site; that span reads QLRDK. Residues Asp-88 and Asp-107 each contribute to the Mg(2+) site. Ser-126 is a 4-amino-2-methyl-5-(diphosphooxymethyl)pyrimidine binding site. 152–154 is a 2-[(2R,5Z)-2-carboxy-4-methylthiazol-5(2H)-ylidene]ethyl phosphate binding site; it reads TPT. Lys-155 contacts 4-amino-2-methyl-5-(diphosphooxymethyl)pyrimidine. Residue Gly-183 participates in 2-[(2R,5Z)-2-carboxy-4-methylthiazol-5(2H)-ylidene]ethyl phosphate binding.

Belongs to the thiamine-phosphate synthase family. Mg(2+) serves as cofactor.

It catalyses the reaction 2-[(2R,5Z)-2-carboxy-4-methylthiazol-5(2H)-ylidene]ethyl phosphate + 4-amino-2-methyl-5-(diphosphooxymethyl)pyrimidine + 2 H(+) = thiamine phosphate + CO2 + diphosphate. The enzyme catalyses 2-(2-carboxy-4-methylthiazol-5-yl)ethyl phosphate + 4-amino-2-methyl-5-(diphosphooxymethyl)pyrimidine + 2 H(+) = thiamine phosphate + CO2 + diphosphate. It carries out the reaction 4-methyl-5-(2-phosphooxyethyl)-thiazole + 4-amino-2-methyl-5-(diphosphooxymethyl)pyrimidine + H(+) = thiamine phosphate + diphosphate. The protein operates within cofactor biosynthesis; thiamine diphosphate biosynthesis; thiamine phosphate from 4-amino-2-methyl-5-diphosphomethylpyrimidine and 4-methyl-5-(2-phosphoethyl)-thiazole: step 1/1. In terms of biological role, condenses 4-methyl-5-(beta-hydroxyethyl)thiazole monophosphate (THZ-P) and 2-methyl-4-amino-5-hydroxymethyl pyrimidine pyrophosphate (HMP-PP) to form thiamine monophosphate (TMP). This Mycobacterium sp. (strain KMS) protein is Thiamine-phosphate synthase.